The chain runs to 1856 residues: Zinc metalloprotease ZmpC (1856 aa).

The signal sequence occupies residues M1 to A42. Residues D43 to T95 constitute a propeptide that is removed on maturation. The LPXTG sorting signal signature appears at L92–G96. T95 is modified (pentaglycyl murein peptidoglycan amidated threonine). 2 helical membrane-spanning segments follow: residues F97–V117 and F130–I152. Over L153–K1856 the chain is Extracellular. Composition is skewed to polar residues over residues N254–Q267 and N286–S295. Residues N254–P362 are disordered. 2 stretches are compositionally biased toward basic and acidic residues: residues P322–L334 and H351–E361. A G5 domain is found at A417–V496. H1502 is a binding site for Zn(2+). The active site involves E1503. Positions 1506 and 1526 each coordinate Zn(2+).

It belongs to the peptidase M26 family. Zn(2+) serves as cofactor. In terms of processing, the Gram-positive cell-wall anchor motif LPXTG is located in the N-terminal part, in contrast to such motifs in other known streptococcal and staphylococcal proteins. The protease could be cleaved by the sortase and anchored in the membrane via the two potential N-terminal transmembrane domains, whereas the propeptide located prior to the LPXTG motif would remain attached to the cell wall peptidoglycan by an amide bond.

The protein resides in the secreted. The protein localises to the cell wall. It is found in the membrane. Zinc metalloproteinase that specifically cleaves human matrix metalloproteinase 9 (MMP-9), leading to its activation. May play a role in pneumococcal virulence and pathogenicity in the lung. This Streptococcus pneumoniae serotype 4 (strain ATCC BAA-334 / TIGR4) protein is Zinc metalloprotease ZmpC (zmpC).